The following is a 355-amino-acid chain: MLSIFVTFLGAFLTLIVMRPLANWIGLVDKPNYRKRHQGTIPLIGGASLFVGNLCYYLMEWDQLRLPYLYLFSIFVLLAIGILDDRFDISPFLRAGIQAILAILMIDLGNIYLDHLGQILGPFQLTLGSIGLIITVFATIAIINAFNMIDGIDGLLGGLSCVSFAAIGILMYRDGQMDMAHWSFALIVSILPYLMLNLGIPFGPKYKVFMGDAGSTLIGFTIIWILLLSTQGKGHPMNPVTALWIIAIPLIDMVAIIYRRVRKGKSPFRPDRLHVHHLMVRAGLTSRQAFLLITFVSAVCATIGILGEVYYVNEWAMFVGFFILFFLYVYSITHAWRITRWVRRMKRRAKRLKKA.

Helical transmembrane passes span Met1 to Leu21, Gly39 to Met59, Gln63 to Leu83, Phe123 to Ile143, Trp182 to Phe202, Val208 to Leu228, Met237 to Ile257, and Trp315 to Ala335.

This sequence belongs to the glycosyltransferase 4 family. WecA subfamily. It depends on Mg(2+) as a cofactor. Mn(2+) serves as cofactor.

It is found in the cell inner membrane. It catalyses the reaction di-trans,octa-cis-undecaprenyl phosphate + UDP-N-acetyl-alpha-D-glucosamine = N-acetyl-alpha-D-glucosaminyl-di-trans,octa-cis-undecaprenyl diphosphate + UMP. It functions in the pathway bacterial outer membrane biogenesis; LPS O-antigen biosynthesis. In terms of biological role, catalyzes the transfer of the GlcNAc-1-phosphate moiety from UDP-GlcNAc onto the carrier lipid undecaprenyl phosphate (C55-P), yielding GlcNAc-pyrophosphoryl-undecaprenyl (GlcNAc-PP-C55). In Haemophilus influenzae (strain ATCC 51907 / DSM 11121 / KW20 / Rd), this protein is Undecaprenyl-phosphate alpha-N-acetylglucosaminyl 1-phosphate transferase.